Here is a 393-residue protein sequence, read N- to C-terminus: GDP-mannose:cellobiosyl-diphosphopolyprenol alpha-mannosyltransferase (393 aa).

This sequence belongs to the glycosyltransferase group 1 family. Glycosyltransferase 4 subfamily.

It catalyses the reaction beta-D-Glc-(1-&gt;4)-alpha-D-Glc-di-trans,octa-cis-undecaprenyl diphosphate + GDP-alpha-D-mannose = alpha-D-Man-(1-&gt;3)-beta-D-Glc-(1-&gt;4)-alpha-D-Glc-1-di-trans,octa-cis-undecaprenyl diphosphate + GDP + H(+). Its function is as follows. Involved in the biosynthesis of the exopolysaccharide acetan, a water-soluble polysaccharide involved in production of bacterial cellulose (BC). The sequence is that of GDP-mannose:cellobiosyl-diphosphopolyprenol alpha-mannosyltransferase (aceC) from Komagataeibacter xylinus (Gluconacetobacter xylinus).